Here is a 116-residue protein sequence, read N- to C-terminus: MNLFATILIIMTTLSLVLALVSFWLPQMNSDTEKLSPYECGFDPLGSARLPFSLRFFLVAVLFPLFDLEIALLLPLPWGDQLNNPMETLFWAMTVLILLTLGLAYEWAQGGLEWAE.

3 consecutive transmembrane segments (helical) span residues leucine 3–phenylalanine 23, phenylalanine 56–leucine 76, and threonine 88–alanine 108.

This sequence belongs to the complex I subunit 3 family. As to quaternary structure, core subunit of respiratory chain NADH dehydrogenase (Complex I) which is composed of 45 different subunits.

The protein localises to the mitochondrion inner membrane. It carries out the reaction a ubiquinone + NADH + 5 H(+)(in) = a ubiquinol + NAD(+) + 4 H(+)(out). Functionally, core subunit of the mitochondrial membrane respiratory chain NADH dehydrogenase (Complex I) which catalyzes electron transfer from NADH through the respiratory chain, using ubiquinone as an electron acceptor. Essential for the catalytic activity of complex I. In Danio rerio (Zebrafish), this protein is NADH-ubiquinone oxidoreductase chain 3 (mt-nd3).